We begin with the raw amino-acid sequence, 415 residues long: Translation initiation factor 2 subunit gamma (415 aa).

One can recognise a tr-type G domain in the interval 7-206 (QPEVNIGVVG…GIEEYIKTPY (200 aa)). Residues 16–23 (GHVDHGKT) form a G1 region. Mg(2+) is bound by residues aspartate 19, threonine 23, glycine 44, and threonine 46. 19-24 (DHGKTT) contacts GTP. Positions 44–48 (GMTIK) are G2. Residues cysteine 59, cysteine 62, cysteine 74, and cysteine 77 each contribute to the Zn(2+) site. The G3 stretch occupies residues 93–96 (DAPG). GTP-binding positions include 149-152 (NKVD) and 184-186 (SAL). The interval 149–152 (NKVD) is G4. Positions 184-186 (SAL) are G5.

This sequence belongs to the TRAFAC class translation factor GTPase superfamily. Classic translation factor GTPase family. EIF2G subfamily. Heterotrimer composed of an alpha, a beta and a gamma chain. Mg(2+) is required as a cofactor.

It catalyses the reaction GTP + H2O = GDP + phosphate + H(+). Functionally, eIF-2 functions in the early steps of protein synthesis by forming a ternary complex with GTP and initiator tRNA. The polypeptide is Translation initiation factor 2 subunit gamma (Saccharolobus solfataricus (strain ATCC 35092 / DSM 1617 / JCM 11322 / P2) (Sulfolobus solfataricus)).